The sequence spans 116 residues: L-amino-acid oxidase BjussuLAAO-II (116 aa).

42 to 45 (GPMR) contacts FAD. Substrate contacts are provided by Arg-45 and His-78.

Belongs to the flavin monoamine oxidase family. FIG1 subfamily. In terms of assembly, homodimer; non-covalently linked. FAD serves as cofactor. In terms of processing, glycosylated. Expressed by the venom gland.

The protein localises to the secreted. The catalysed reaction is an L-alpha-amino acid + O2 + H2O = a 2-oxocarboxylate + H2O2 + NH4(+). The enzyme catalyses L-leucine + O2 + H2O = 4-methyl-2-oxopentanoate + H2O2 + NH4(+). It catalyses the reaction L-phenylalanine + O2 + H2O = 3-phenylpyruvate + H2O2 + NH4(+). It carries out the reaction L-methionine + O2 + H2O = 4-methylsulfanyl-2-oxobutanoate + H2O2 + NH4(+). The catalysed reaction is L-isoleucine + O2 + H2O = (S)-3-methyl-2-oxopentanoate + H2O2 + NH4(+). The enzyme catalyses L-histidine + O2 + H2O = 3-(imidazol-5-yl)pyruvate + H2O2 + NH4(+). It catalyses the reaction L-tyrosine + O2 + H2O = 3-(4-hydroxyphenyl)pyruvate + H2O2 + NH4(+). It carries out the reaction L-tryptophan + O2 + H2O = indole-3-pyruvate + H2O2 + NH4(+). Its enzymatic activities is reduced by the presence of Zn(2+), Al(3+), Cu(2+), Na(+) or Ni(2+) salts. In terms of biological role, catalyzes an oxidative deamination of predominantly hydrophobic and aromatic L-amino acids, thus producing hydrogen peroxide that may contribute to the diverse toxic effects of this enzyme. Shows very high enzymatic activity on L-Met and L-Leu, high activity on L-Ile, L-Phe and L-Tyr and moderate activity on L-His. Exhibits diverse biological activities, such as hemorrhage, hemolysis, edema, apoptosis of vascular endothelial cells or tumor cell lines, and antibacterial, as well as regulation of platelet aggregation. Effects of snake L-amino oxidases on platelets are controversial, since they either induce aggregation or inhibit agonist-induced aggregation. These different effects are probably due to different experimental conditions. In vitro, has a strong antiprotozoal effect against Leishmania amazonensis (IC(50)=4.56 ug/mL) and Trypanosoma cruzi (IC(50)=4.85 ug/mL). It also causes cell death and DNA damage in hepatocarcinoma cells (HepG2) in vitro by inducing oxidative stress. It exerts cytotoxicity towards colorectal adenocarcinomahuman cells (Caco-2) by acting on multiple intracellular targets. It diminishes cell viability by decreasing mitochondrial activity, the activity of acid phosphatases, and lysosomal function. In addition, it increases intracellular levels of reactive oxygen species and DNA damage, it elevates the expression of the pro-inflammatory cytokine genes TNF and IL6, and lowers the expression of the apoptotic-related genes. Also induces cytotoxicity (IC(50)=1.80 ug/mL) and apoptosis in MCF-7 cells (a human breast adeno-carcinoma cell line) by activating the intrinsic and extrinsic apoptosis pathways, but are not cytotoxic towards MCF-10A cells (a non-tumorigenic human breast epithelial cell line). This Bothrops jararacussu (Jararacussu) protein is L-amino-acid oxidase BjussuLAAO-II.